The chain runs to 488 residues: Homoserine O-acetyltransferase (488 aa).

The 309-residue stretch at 47 to 355 (NAILVCHALT…SYGHDAFLLE (309 aa)) folds into the AB hydrolase-1 domain. Serine 153 functions as the Nucleophile in the catalytic mechanism. Arginine 222 contributes to the substrate binding site. Catalysis depends on residues aspartate 316 and histidine 349. Aspartate 350 contacts substrate. 2 CBS domains span residues 376–433 (MTEK…CSKL) and 437–488 (MTRD…RLIG).

The protein belongs to the AB hydrolase superfamily. MetX family. Homodimer.

The protein localises to the cytoplasm. The catalysed reaction is L-homoserine + acetyl-CoA = O-acetyl-L-homoserine + CoA. It functions in the pathway amino-acid biosynthesis; L-methionine biosynthesis via de novo pathway; O-acetyl-L-homoserine from L-homoserine: step 1/1. Functionally, transfers an acetyl group from acetyl-CoA to L-homoserine, forming acetyl-L-homoserine. The chain is Homoserine O-acetyltransferase from Methanococcoides burtonii (strain DSM 6242 / NBRC 107633 / OCM 468 / ACE-M).